A 298-amino-acid polypeptide reads, in one-letter code: UDP-N-acetylenolpyruvoylglucosamine reductase (298 aa).

In terms of domain architecture, FAD-binding PCMH-type spans 27–191 (TGGNADVFVM…LDATFSLELE (165 aa)). Residue R170 is part of the active site. S220 serves as the catalytic Proton donor. The active site involves E290.

Belongs to the MurB family. FAD serves as cofactor.

It is found in the cytoplasm. It carries out the reaction UDP-N-acetyl-alpha-D-muramate + NADP(+) = UDP-N-acetyl-3-O-(1-carboxyvinyl)-alpha-D-glucosamine + NADPH + H(+). It functions in the pathway cell wall biogenesis; peptidoglycan biosynthesis. Its function is as follows. Cell wall formation. In Listeria innocua serovar 6a (strain ATCC BAA-680 / CLIP 11262), this protein is UDP-N-acetylenolpyruvoylglucosamine reductase.